Consider the following 304-residue polypeptide: Pyridoxal 5'-phosphate synthase subunit pyroA (304 aa).

Aspartate 28 lines the D-ribose 5-phosphate pocket. Lysine 85 acts as the Schiff-base intermediate with D-ribose 5-phosphate in catalysis. Glycine 157 is a D-ribose 5-phosphate binding site. Arginine 169 provides a ligand contact to D-glyceraldehyde 3-phosphate. D-ribose 5-phosphate-binding positions include glycine 224 and 245–246 (GS).

This sequence belongs to the PdxS/SNZ family.

It catalyses the reaction aldehydo-D-ribose 5-phosphate + D-glyceraldehyde 3-phosphate + L-glutamine = pyridoxal 5'-phosphate + L-glutamate + phosphate + 3 H2O + H(+). Its pathway is cofactor biosynthesis; pyridoxal 5'-phosphate biosynthesis. Catalyzes the formation of pyridoxal 5'-phosphate from ribose 5-phosphate (RBP), glyceraldehyde 3-phosphate (G3P) and ammonia. The ammonia is provided by PDX2. Can also use ribulose 5-phosphate and dihydroxyacetone phosphate as substrates, resulting from enzyme-catalyzed isomerization of RBP and G3P, respectively. Also plays an indirect role in resistance to singlet oxygen-generating photosensitizers. This Emericella nidulans (strain FGSC A4 / ATCC 38163 / CBS 112.46 / NRRL 194 / M139) (Aspergillus nidulans) protein is Pyridoxal 5'-phosphate synthase subunit pyroA (pyroA).